The following is a 324-amino-acid chain: Elongation factor Ts, mitochondrial (324 aa).

A mitochondrion-targeting transit peptide spans 1–44; sequence MSLLRSLRFFPVACTGRSARAVLLQPSQPWLTFHAGPSLSSAAS. An N6-succinyllysine mark is found at K75, K132, and K191. S269 bears the Phosphoserine mark.

The protein belongs to the EF-Ts family.

Its subcellular location is the mitochondrion. In terms of biological role, associates with the EF-Tu.GDP complex and induces the exchange of GDP to GTP. It remains bound to the aminoacyl-tRNA.EF-Tu.GTP complex up to the GTP hydrolysis stage on the ribosome. This Mus musculus (Mouse) protein is Elongation factor Ts, mitochondrial (Tsfm).